The following is a 529-amino-acid chain: Glycylpeptide N-tetradecanoyltransferase (529 aa).

Residues 1 to 10 (MSEQEGNQSE) show a composition bias toward polar residues. Residues 1-65 (MSEQEGNQSE…ANPATKLTPS (65 aa)) form a disordered region. Residues 11–23 (HQSEHVGESEGKL) are compositionally biased toward basic and acidic residues. The span at 26 to 40 (ETPTTSQSTNASTGT) shows a compositional bias: polar residues. Tetradecanoyl-CoA is bound by residues 118-121 (FKFW), 252-254 (LCV), and 260-264 (SKRLT). Residue Val529 is the Proton acceptor; via carboxylate of the active site.

It belongs to the NMT family. Monomer.

The protein localises to the cytoplasm. The catalysed reaction is N-terminal glycyl-[protein] + tetradecanoyl-CoA = N-tetradecanoylglycyl-[protein] + CoA + H(+). Functionally, adds a myristoyl group to the N-terminal glycine residue of certain cellular proteins. This is Glycylpeptide N-tetradecanoyltransferase from Ajellomyces capsulatus (Darling's disease fungus).